We begin with the raw amino-acid sequence, 171 residues long: UPF0312 protein SAOUHSC_03022 (171 aa).

The protein belongs to the UPF0312 family.

This chain is UPF0312 protein SAOUHSC_03022, found in Staphylococcus aureus (strain NCTC 8325 / PS 47).